Here is a 602-residue protein sequence, read N- to C-terminus: UvrABC system protein C (602 aa).

Residues 17–94 form the GIY-YIG domain; the sequence is KTSGCYKMYS…IKKYKPTYNI (78 aa). Residues 199–234 form the UVR domain; that stretch reads SKLLNDIEIKMKEVIMKENFEAAIKLKETKKSLIEI.

The protein belongs to the UvrC family. In terms of assembly, interacts with UvrB in an incision complex.

The protein localises to the cytoplasm. Its function is as follows. The UvrABC repair system catalyzes the recognition and processing of DNA lesions. UvrC both incises the 5' and 3' sides of the lesion. The N-terminal half is responsible for the 3' incision and the C-terminal half is responsible for the 5' incision. The chain is UvrABC system protein C from Borrelia recurrentis (strain A1).